Here is a 372-residue protein sequence, read N- to C-terminus: NAD(P)H-quinone oxidoreductase subunit 1 (372 aa).

The next 8 membrane-spanning stretches (helical) occupy residues 27-47 (IIWLPLPMLLVLVSAVVGVLV), 97-117 (ILFTAGPILVLVPVILSWLIV), 128-148 (VGIGIFLWIALSSIQPIGLLM), 176-196 (LALSVLAIVLMTNSLSTIDIV), 204-224 (ILSWNIWRQPVGFIIFWICAL), 266-286 (ILSALLVSILYLGGWGFPIPV), 308-328 (SIGIIMTVLKAYLLVFVAILL), and 347-367 (FLLPISLANLLVTAGLKLAFP).

This sequence belongs to the complex I subunit 1 family. In terms of assembly, NDH-1 is composed of at least 11 different subunits.

Its subcellular location is the cellular thylakoid membrane. The enzyme catalyses a plastoquinone + NADH + (n+1) H(+)(in) = a plastoquinol + NAD(+) + n H(+)(out). It carries out the reaction a plastoquinone + NADPH + (n+1) H(+)(in) = a plastoquinol + NADP(+) + n H(+)(out). Its function is as follows. NDH-1 shuttles electrons from an unknown electron donor, via FMN and iron-sulfur (Fe-S) centers, to quinones in the respiratory and/or the photosynthetic chain. The immediate electron acceptor for the enzyme in this species is believed to be plastoquinone. Couples the redox reaction to proton translocation, and thus conserves the redox energy in a proton gradient. This Prochlorococcus marinus subsp. pastoris (strain CCMP1986 / NIES-2087 / MED4) protein is NAD(P)H-quinone oxidoreductase subunit 1.